Consider the following 139-residue polypeptide: Protein spalt-accessory (139 aa).

Residues 1–16 form the signal peptide; the sequence is MKLLIALLALVTAAIA. Gly residues predominate over residues 60 to 75; that stretch reads GIGQGGVHPGQGGFAG. Residues 60-139 are disordered; that stretch reads GIGQGGVHPG…HHEHHGHHRH (80 aa). Residues 109–121 show a composition bias toward basic and acidic residues; the sequence is NPHEYPEHHGEHH. A compositionally biased stretch (basic residues) spans 122-139; the sequence is REHHEHHGHHEHHGHHRH.

The protein localises to the secreted. In terms of biological role, likely to be involved in the establishment of the head. This Drosophila simulans (Fruit fly) protein is Protein spalt-accessory (sala).